The primary structure comprises 44 residues: Photosystem I reaction center subunit IX (44 aa).

A helical transmembrane segment spans residues 7-27 (YLSTAPVLATLWFGSLAGLLI).

The protein belongs to the PsaJ family.

The protein resides in the plastid. It localises to the chloroplast thylakoid membrane. In terms of biological role, may help in the organization of the PsaE and PsaF subunits. The sequence is that of Photosystem I reaction center subunit IX from Calycanthus floridus var. glaucus (Eastern sweetshrub).